A 582-amino-acid polypeptide reads, in one-letter code: Sorting nexin-4 (582 aa).

Positions 1–11 are enriched in polar residues; it reads MSSDDQFTSIQ. Positions 1–111 are disordered; the sequence is MSSDDQFTSI…VNQEPSSDSQ (111 aa). Basic and acidic residues-rich tracts occupy residues 12–27 and 35–54; these read WDRDELGPNKETKVNK and DEHHNNDNEDKDNDTTKSNE. The segment covering 57 to 70 has biased composition (acidic residues); sequence NIQEDDETKDDNEP. The PX domain occupies 116 to 249; sequence EINVVVTSPL…HLFVSDSADW (134 aa). A 1,2-diacyl-sn-glycero-3-phospho-(1D-myo-inositol-3-phosphate) is bound by residues R171, K197, and R216. Coiled-coil stretches lie at residues 300–329 and 494–529; these read SKHKRETNKEILEISDKLKKLYENLIKLDK and SSVTESKVTKLQNRITELENEISVQSQLVLDLTNKI.

The protein belongs to the sorting nexin family.

The protein resides in the cytoplasm. It localises to the cytosol. Its subcellular location is the preautophagosomal structure membrane. It is found in the endosome membrane. Sorting nexin, involved in the separation or division of vacuoles throughout the entire life cycle of the cells. Involved in retrieval of late-Golgi SNAREs from post-Golgi endosomes to the trans-Golgi network, for cytoplasm to vacuole transport (Cvt), and autophagy of large cargos including mitophagy, pexophagy and glycophagy. This is Sorting nexin-4 (SNX4) from Debaryomyces hansenii (strain ATCC 36239 / CBS 767 / BCRC 21394 / JCM 1990 / NBRC 0083 / IGC 2968) (Yeast).